Consider the following 183-residue polypeptide: Capsid protein (183 aa).

The disordered stretch occupies residues 136 to 183 (NAPILSTLPETTVVRRRGRSPRRRTPSPRRRRSQSPRRRRSQSRESQC). Positions 149–176 (VRRRGRSPRRRTPSPRRRRSQSPRRRRS) are enriched in basic residues. Phosphoserine; by host is present on residues serine 155, serine 162, and serine 170. The stretch at 155-161 (SPRRRTP) is one 1; half-length repeat. The tract at residues 155–177 (SPRRRTPSPRRRRSQSPRRRRSQ) is 3 X 8 AA repeats of S-P-R-R-R-[PR]-S-Q. A Bipartite nuclear localization signal motif is present at residues 158–175 (RRTPSPRRRRSQSPRRRR). 2 repeat units span residues 162–169 (SPRRRRSQ) and 170–177 (SPRRRRSQ). The tract at residues 177–183 (QSRESQC) is RNA binding.

It belongs to the orthohepadnavirus core antigen family. As to quaternary structure, homodimerizes, then multimerizes. Interacts with cytosol exposed regions of viral L glycoprotein present in the reticulum-to-Golgi compartment. Interacts with human FLNB. Phosphorylated form interacts with host importin alpha; this interaction depends on the exposure of the NLS, which itself depends upon genome maturation and/or phosphorylation of the capsid protein. Interacts with host NUP153. In terms of processing, phosphorylated by host SRPK1, SRPK2, and maybe protein kinase C or GAPDH. Phosphorylation is critical for pregenomic RNA packaging. Protein kinase C phosphorylation is stimulated by HBx protein and may play a role in transport of the viral genome to the nucleus at the late step during the viral replication cycle.

Its subcellular location is the virion. It localises to the host cytoplasm. Its function is as follows. Self assembles to form an icosahedral capsid. Most capsids appear to be large particles with an icosahedral symmetry of T=4 and consist of 240 copies of capsid protein, though a fraction forms smaller T=3 particles consisting of 180 capsid proteins. Entering capsids are transported along microtubules to the nucleus. Phosphorylation of the capsid is thought to induce exposure of nuclear localization signal in the C-terminal portion of the capsid protein that allows binding to the nuclear pore complex via the importin (karyopherin-) alpha and beta. Capsids are imported in intact form through the nuclear pore into the nuclear basket, where it probably binds NUP153. Only capsids that contain the mature viral genome can release the viral DNA and capsid protein into the nucleoplasm. Immature capsids get stuck in the basket. Capsids encapsulate the pre-genomic RNA and the P protein. Pre-genomic RNA is reverse-transcribed into DNA while the capsid is still in the cytoplasm. The capsid can then either be directed to the nucleus, providing more genomes for transcription, or bud through the endoplasmic reticulum to provide new virions. This chain is Capsid protein, found in Homo sapiens (Human).